Consider the following 369-residue polypeptide: Arsenite methyltransferase (369 aa).

S46 is modified (phosphoserine).

This sequence belongs to the methyltransferase superfamily. Arsenite methyltransferase family.

The protein localises to the cytoplasm. It is found in the cytosol. It carries out the reaction arsenic triglutathione + [thioredoxin]-dithiol + S-adenosyl-L-methionine + 2 H2O = methylarsonous acid + [thioredoxin]-disulfide + 3 glutathione + S-adenosyl-L-homocysteine + H(+). The catalysed reaction is arsenic triglutathione + 2 [thioredoxin]-dithiol + 2 S-adenosyl-L-methionine + H2O = dimethylarsinous acid + 2 [thioredoxin]-disulfide + 3 glutathione + 2 S-adenosyl-L-homocysteine + 2 H(+). The enzyme catalyses arsenic triglutathione + 3 [thioredoxin]-dithiol + 3 S-adenosyl-L-methionine = trimethylarsine + 3 [thioredoxin]-disulfide + 3 glutathione + 3 S-adenosyl-L-homocysteine + 3 H(+). Its function is as follows. Catalyzes the transfer of a methyl group from AdoMet to trivalent arsenicals producing methylated and dimethylated arsenicals. It methylates arsenite to form methylarsonate, Me-AsO(3)H(2), which is reduced by methylarsonate reductase to methylarsonite, Me-As(OH)2. Methylarsonite is also a substrate and it is converted into the much less toxic compound dimethylarsinate (cacodylate), Me(2)As(O)-OH. This is Arsenite methyltransferase (As3mt) from Rattus norvegicus (Rat).